The chain runs to 688 residues: Methionine--tRNA ligase (688 aa).

The 'HIGH' region signature appears at 15–25 (PYANGPIHLGH). Residues Cys-146, Cys-149, Cys-159, and Cys-162 each coordinate Zn(2+). Positions 332-336 (KMSKS) match the 'KMSKS' region motif. Lys-335 contributes to the ATP binding site. Residues 552–576 (AEAPKKADSKKATDTPVDTRPPLES) form a disordered region. Positions 554 to 564 (APKKADSKKAT) are enriched in basic and acidic residues. The tRNA-binding domain occupies 587–688 (DFAKIDLRIA…EGAQPGMRVK (102 aa)).

It belongs to the class-I aminoacyl-tRNA synthetase family. MetG type 1 subfamily. Homodimer. It depends on Zn(2+) as a cofactor.

It is found in the cytoplasm. The catalysed reaction is tRNA(Met) + L-methionine + ATP = L-methionyl-tRNA(Met) + AMP + diphosphate. Is required not only for elongation of protein synthesis but also for the initiation of all mRNA translation through initiator tRNA(fMet) aminoacylation. This is Methionine--tRNA ligase from Shewanella woodyi (strain ATCC 51908 / MS32).